Consider the following 70-residue polypeptide: ATP synthase subunit epsilon, mitochondrial (70 aa).

It belongs to the eukaryotic ATPase epsilon family. F-type ATPases have 2 components, CF(1) - the catalytic core - and CF(0) - the membrane proton channel. CF(1) has five subunits: alpha(3), beta(3), gamma(1), delta(1), epsilon(1). CF(0) has three main subunits: a, b and c.

The protein resides in the mitochondrion. Its subcellular location is the mitochondrion inner membrane. In terms of biological role, mitochondrial membrane ATP synthase (F(1)F(0) ATP synthase or Complex V) produces ATP from ADP in the presence of a proton gradient across the membrane which is generated by electron transport complexes of the respiratory chain. F-type ATPases consist of two structural domains, F(1) - containing the extramembraneous catalytic core, and F(0) - containing the membrane proton channel, linked together by a central stalk and a peripheral stalk. During catalysis, ATP synthesis in the catalytic domain of F(1) is coupled via a rotary mechanism of the central stalk subunits to proton translocation. Part of the complex F(1) domain and of the central stalk which is part of the complex rotary element. Rotation of the central stalk against the surrounding alpha(3)beta(3) subunits leads to hydrolysis of ATP in three separate catalytic sites on the beta subunits. The chain is ATP synthase subunit epsilon, mitochondrial from Ipomoea batatas (Sweet potato).